The primary structure comprises 224 residues: 7-cyano-7-deazaguanine synthase (224 aa).

Residue Leu-12 to Thr-22 participates in ATP binding. 4 residues coordinate Zn(2+): Cys-193, Cys-201, Cys-204, and Cys-207.

The protein belongs to the QueC family. It depends on Zn(2+) as a cofactor.

It catalyses the reaction 7-carboxy-7-deazaguanine + NH4(+) + ATP = 7-cyano-7-deazaguanine + ADP + phosphate + H2O + H(+). It participates in purine metabolism; 7-cyano-7-deazaguanine biosynthesis. Catalyzes the ATP-dependent conversion of 7-carboxy-7-deazaguanine (CDG) to 7-cyano-7-deazaguanine (preQ(0)). This Prochlorococcus marinus (strain MIT 9215) protein is 7-cyano-7-deazaguanine synthase.